The chain runs to 533 residues: Chromosomal replication initiator protein DnaA (533 aa).

The tract at residues 1–72 (MNDFWQHCSA…DLARDFWNAP (72 aa)) is domain I, interacts with DnaA modulators. The tract at residues 72–196 (PIEVQFVLDP…EAADSMYERS (125 aa)) is domain II. The interval 83–120 (AGQRSPAGATPLAPRAPLPSANPAPVAPGPASAPAVDA) is disordered. The segment covering 96 to 110 (PRAPLPSANPAPVAP) has biased composition (pro residues). The segment covering 111 to 120 (GPASAPAVDA) has biased composition (low complexity). The interval 197 to 413 (KLNPVLTFDN…GALRKILAYS (217 aa)) is domain III, AAA+ region. ATP contacts are provided by Gly241, Gly243, Lys244, and Thr245. Residues 414-533 (KFHGREITIE…LHVLEQTLKG (120 aa)) form a domain IV, binds dsDNA region.

The protein belongs to the DnaA family. Oligomerizes as a right-handed, spiral filament on DNA at oriC.

It localises to the cytoplasm. Plays an essential role in the initiation and regulation of chromosomal replication. ATP-DnaA binds to the origin of replication (oriC) to initiate formation of the DNA replication initiation complex once per cell cycle. Binds the DnaA box (a 9 base pair repeat at the origin) and separates the double-stranded (ds)DNA. Forms a right-handed helical filament on oriC DNA; dsDNA binds to the exterior of the filament while single-stranded (ss)DNA is stabiized in the filament's interior. The ATP-DnaA-oriC complex binds and stabilizes one strand of the AT-rich DNA unwinding element (DUE), permitting loading of DNA polymerase. After initiation quickly degrades to an ADP-DnaA complex that is not apt for DNA replication. Binds acidic phospholipids. This is Chromosomal replication initiator protein DnaA from Burkholderia pseudomallei (strain 1710b).